Consider the following 515-residue polypeptide: Gap junction alpha-9 protein (515 aa).

The Cytoplasmic portion of the chain corresponds to 1 to 19; sequence MGDWNLLGDTLEEVHIHST. A helical transmembrane segment spans residues 20–40; sequence MIGKIWLTILFIFRMLVLGVA. Residues 41-77 lie on the Extracellular side of the membrane; it reads AEDVWNDEQSGFICNTEQPGCRNVCYDQAFPISLIRY. The helical transmembrane segment at 78 to 98 threads the bilayer; the sequence is WVLQVIFVSSPSLVYMGHALY. Over 99–166 the chain is Cytoplasmic; sequence RLRVLEEERQ…YVIHIFTRSV (68 aa). A helical transmembrane segment spans residues 167-187; that stretch reads VEVGFMIGQYLLYGFHLEPLF. The Extracellular segment spans residues 188-209; it reads KCHGHPCPNIIDCFVSRPTEKT. A helical transmembrane segment spans residues 210–230; sequence IFLLFMQSIATISLFLNILEI. Residues 231–515 lie on the Cytoplasmic side of the membrane; the sequence is FHLGFKKIKR…GRRVPTDLQI (285 aa). Positions 370–380 are enriched in basic and acidic residues; that stretch reads KRETEGKDSKR. 2 disordered regions span residues 370-400 and 428-472; these read KRET…GENN and SSTE…NTAD. Positions 456-472 are enriched in polar residues; that stretch reads PPSQGDSQSLDIPNTAD.

The protein belongs to the connexin family. Alpha-type (group II) subfamily. As to quaternary structure, a connexon is composed of a hexamer of connexins. In terms of tissue distribution, highly abundant in skeletal muscle. Also detected in testis.

Its subcellular location is the cell membrane. The protein localises to the cell junction. It localises to the gap junction. In terms of biological role, one gap junction consists of a cluster of closely packed pairs of transmembrane channels, the connexons, through which materials of low MW diffuse from one cell to a neighboring cell. This is Gap junction alpha-9 protein (GJA9) from Homo sapiens (Human).